Reading from the N-terminus, the 362-residue chain is GTP 3',8-cyclase (362 aa).

A Radical SAM core domain is found at 8-228 (SLGRPLRDLR…ARISSHWPID (221 aa)). Position 17 (arginine 17) interacts with GTP. [4Fe-4S] cluster-binding residues include cysteine 24 and cysteine 28. S-adenosyl-L-methionine is bound at residue tyrosine 30. A [4Fe-4S] cluster-binding site is contributed by cysteine 31. Position 71 (arginine 71) interacts with GTP. Glycine 75 serves as a coordination point for S-adenosyl-L-methionine. Position 102 (threonine 102) interacts with GTP. Residue serine 126 coordinates S-adenosyl-L-methionine. Position 164 (lysine 164) interacts with GTP. Position 198 (methionine 198) interacts with S-adenosyl-L-methionine. The [4Fe-4S] cluster site is built by cysteine 262 and cysteine 265. 267–269 (RLR) serves as a coordination point for GTP. Cysteine 279 provides a ligand contact to [4Fe-4S] cluster. The interval 325-362 (ALDSDGSREDADESEASAVPGRSTHPGHRKVEMSYIGG) is disordered.

The protein belongs to the radical SAM superfamily. MoaA family. In terms of assembly, monomer and homodimer. Requires [4Fe-4S] cluster as cofactor.

It carries out the reaction GTP + AH2 + S-adenosyl-L-methionine = (8S)-3',8-cyclo-7,8-dihydroguanosine 5'-triphosphate + 5'-deoxyadenosine + L-methionine + A + H(+). It functions in the pathway cofactor biosynthesis; molybdopterin biosynthesis. Catalyzes the cyclization of GTP to (8S)-3',8-cyclo-7,8-dihydroguanosine 5'-triphosphate. The polypeptide is GTP 3',8-cyclase (Acidothermus cellulolyticus (strain ATCC 43068 / DSM 8971 / 11B)).